The primary structure comprises 346 residues: MKRKVYVGMDVHKETIQIAYLTSNSKEILKEQQIKHNEVQIKKFIKKLKLEWNEIHCCYEAGVTGYPLYRYLKSLGVNCILLAPGKIPRQNTDKIKTDKRDAIKLARLMRSWRIGIDSCFPVEEDEAVRDYLRSRDSLRLDLGRNRQRLMKFLLRKDIKLLPTTKYWTVSHYKWLNNLHFNNEILQETFNDYYSRVRVQEENLKAMDKKIQEIAESEPYREKVGILRCFRGVDYLTAMFLLCEVNDFKPIQNGRFVHEFSWTCSWRIFQRFQKKTNRDYVKLEVPRLRRILTEAAWQHRFPGTGSKIITARRSGQPALVVALAEKASLRLHKKFRNLQPKRKKLLK.

The protein belongs to the transposase IS1111A/IS1328/IS1533 family.

Required for the transposition of the insertion element. This chain is Transposase for insertion sequence element IS1533 (tnhA), found in Leptospira borgpetersenii.